The chain runs to 317 residues: Pinoresinol reductase 2 (317 aa).

The NADP(+) site is built by Thr18, Ser20, Leu21, Arg41, Lys50, Ser90, Gly91, Arg95, Asn98, and Ser121. Met125 is a binding site for (-)-pinoresinol. NADP(+) is bound by residues Lys144 and Phe166. Residue Lys144 is the Proton acceptor of the active site. A (-)-pinoresinol-binding site is contributed by Gly178.

The protein belongs to the NmrA-type oxidoreductase family. Isoflavone reductase subfamily. In terms of assembly, forms homodimers. In terms of tissue distribution, expressed in roots. Detected in stems.

It catalyses the reaction (-)-lariciresinol + NADP(+) = (-)-pinoresinol + NADPH + H(+). Its function is as follows. Reductase involved in lignan biosynthesis. Unlike conventional pinoresinol reductases that can reduce both pinoresinol and lariciresinol, PRR2 shows a strict substrate selectivity for (-)-pinoresinol. No activity with (+)-pinoresinol or lariciresinol. Abstracts the 4R-hydride from the NADPH cofactor during catalysis. In Arabidopsis thaliana (Mouse-ear cress), this protein is Pinoresinol reductase 2.